A 284-amino-acid chain; its full sequence is 4-hydroxybenzoate octaprenyltransferase (284 aa).

The next 9 membrane-spanning stretches (helical) occupy residues 19 to 39 (IPIL…SHGL), 42 to 62 (ISYL…GCII), 85 to 105 (GQLS…VAFI), 107 to 127 (VLFL…LAIL), 134 to 154 (FFAI…FMAF), 165 to 185 (AWIF…IYAL), 211 to 231 (ILLF…YCDF), 233 to 253 (SFFY…YFLY), and 261 to 281 (CINA…IAVI).

This sequence belongs to the UbiA prenyltransferase family. It depends on Mg(2+) as a cofactor.

It localises to the cell inner membrane. It carries out the reaction all-trans-octaprenyl diphosphate + 4-hydroxybenzoate = 4-hydroxy-3-(all-trans-octaprenyl)benzoate + diphosphate. The protein operates within cofactor biosynthesis; ubiquinone biosynthesis. In terms of biological role, catalyzes the prenylation of para-hydroxybenzoate (PHB) with an all-trans polyprenyl group. Mediates the second step in the final reaction sequence of ubiquinone-8 (UQ-8) biosynthesis, which is the condensation of the polyisoprenoid side chain with PHB, generating the first membrane-bound Q intermediate 3-octaprenyl-4-hydroxybenzoate. This chain is 4-hydroxybenzoate octaprenyltransferase, found in Francisella tularensis subsp. holarctica (strain LVS).